We begin with the raw amino-acid sequence, 277 residues long: NH(3)-dependent NAD(+) synthetase (277 aa).

36–43 provides a ligand contact to ATP; the sequence is GLSGGIDS. D42 contributes to the Mg(2+) binding site. Residue R118 participates in deamido-NAD(+) binding. T138 is a binding site for ATP. E143 contacts Mg(2+). 2 residues coordinate ATP: K167 and S189.

It belongs to the NAD synthetase family. As to quaternary structure, homodimer.

The catalysed reaction is deamido-NAD(+) + NH4(+) + ATP = AMP + diphosphate + NAD(+) + H(+). It functions in the pathway cofactor biosynthesis; NAD(+) biosynthesis; NAD(+) from deamido-NAD(+) (ammonia route): step 1/1. Functionally, catalyzes the ATP-dependent amidation of deamido-NAD to form NAD. Uses ammonia as a nitrogen source. This chain is NH(3)-dependent NAD(+) synthetase, found in Pelodictyon phaeoclathratiforme (strain DSM 5477 / BU-1).